We begin with the raw amino-acid sequence, 282 residues long: NADPH-dependent 7-cyano-7-deazaguanine reductase (282 aa).

88-90 (IES) lines the substrate pocket. NADPH is bound at residue 90 to 91 (SK). Catalysis depends on Cys-190, which acts as the Thioimide intermediate. Asp-197 serves as the catalytic Proton donor. 229–230 (HE) is a binding site for substrate. Residue 258 to 259 (RG) coordinates NADPH.

This sequence belongs to the GTP cyclohydrolase I family. QueF type 2 subfamily. In terms of assembly, homodimer.

It is found in the cytoplasm. It carries out the reaction 7-aminomethyl-7-carbaguanine + 2 NADP(+) = 7-cyano-7-deazaguanine + 2 NADPH + 3 H(+). It functions in the pathway tRNA modification; tRNA-queuosine biosynthesis. In terms of biological role, catalyzes the NADPH-dependent reduction of 7-cyano-7-deazaguanine (preQ0) to 7-aminomethyl-7-deazaguanine (preQ1). This Escherichia coli O45:K1 (strain S88 / ExPEC) protein is NADPH-dependent 7-cyano-7-deazaguanine reductase.